We begin with the raw amino-acid sequence, 210 residues long: MNILLPSTLFVLLMFQIIGSGMGCDMKVRGLDANMKKMILDLHNKKRQIVANGQQSGQPSAANMKELHWNDEIAANAQRSAETCVFEHTAKSLRKTTKYSYLGENIYKGSYPDPIPRSVNAWYDEVKDVTPAVVKSFSSGGPMIGHYTQMVWANTEALDCGLVTASDRNSYLFCQYGPGGNYRSQPIYKQGPPASDCKNGKSSKYPGLCN.

An N-terminal signal peptide occupies residues 1 to 23; the sequence is MNILLPSTLFVLLMFQIIGSGMG.

Contains 3 disulfide bonds. In terms of tissue distribution, expressed by the venom gland.

It is found in the secreted. This Scolopendra dehaani (Thai centipede) protein is Scoloptoxin SSD558.